The sequence spans 357 residues: Peptide chain release factor 1 (357 aa).

Position 236 is an N5-methylglutamine (Gln236).

Belongs to the prokaryotic/mitochondrial release factor family. In terms of processing, methylated by PrmC. Methylation increases the termination efficiency of RF1.

The protein resides in the cytoplasm. Its function is as follows. Peptide chain release factor 1 directs the termination of translation in response to the peptide chain termination codons UAG and UAA. The protein is Peptide chain release factor 1 of Mycobacterium ulcerans (strain Agy99).